The primary structure comprises 392 residues: Pannexin-3 (392 aa).

The Cytoplasmic portion of the chain corresponds to 1–39 (MSLAHTAAEYMLSDALLPDRRGSRLKGLRLELPLDKMVK). Residues 40 to 60 (FVTVGFPLLLMSLAFAQEFSS) form a helical membrane-spanning segment. Topologically, residues 61–113 (GSPISCFSPSNFSVRQAVFVDSSCWDSLAHYKQDEAGQYTVKSLWPHKALPYS) are extracellular. Asn-71 carries an N-linked (GlcNAc...) asparagine glycan. The chain crosses the membrane as a helical span at residues 114 to 134 (LLALAVAMYLPVLLWQYAAVP). At 135-215 (ALSSDLLFII…VATYLLRNAL (81 aa)) the chain is on the cytoplasmic side. The chain crosses the membrane as a helical span at residues 216 to 236 (LLLFTSATYLYLGHFHLDVFF). The Extracellular segment spans residues 237-267 (QEEFSCSIKTGLLHEETHVPELITCRLTSLS). A helical membrane pass occupies residues 268 to 288 (VFQIVSVSSVAIYTVLVPVII). Topologically, residues 289 to 392 (YNLTRLCRWD…LTQHTYDEHP (104 aa)) are cytoplasmic.

The protein belongs to the pannexin family. In terms of assembly, homoheptameric. In terms of tissue distribution, skin.

Its subcellular location is the cell membrane. The protein resides in the cell junction. It is found in the gap junction. The protein localises to the endoplasmic reticulum membrane. It catalyses the reaction Ca(2+)(in) = Ca(2+)(out). The catalysed reaction is ATP(in) = ATP(out). Regulator of osteoblast differentiation by functionning as a Ca(2+) channel in the endoplasmic reticulum which regulates calmodulin (CaM) pathways. Allows ATP release into the extracellular space and activation or purinergic receptors. The chain is Pannexin-3 (Panx3) from Rattus norvegicus (Rat).